The primary structure comprises 442 residues: MAKKLYIETHGCQMNEYDSSRMVDLLGEHQALEVTARAEDADVILLNTCSIRERAQDRVYSQLGRWRELKLANPDMVIAVGGCVASQEGAAIRDRAPYVDVVFGPQTLHRLPEMIDAARISKLPQVDVSFPEIEKFDHLPEPRIDGPSAYVSVMEGCSKYCTFCVVPYTRGEEVSRPFDDVIAEIIHLAENGVREVTLLGQNVNGYRGLTHDGRLADLAELIRVVAAVDGIDRIRYTTSHPLEFSDSLIQAHAEVPELVKHLHLPVQSGSDRILAAMKRNHTALEYKSKLRKLRAAVPGICISSDFIVGFPGETEKDFEQTMKLIADVGFDFSYSFVYSQRPGTPAADLADDTPEELKKERLNALQHRLNQQGFEISRQMVGSVQRILVTDYSKKDPGELQGRTENNRIVNFRCDNPTLIGQFADVHIDAAQPHSLRGSLIQ.

The MTTase N-terminal domain occupies Lys3–Ile120. The [4Fe-4S] cluster site is built by Cys12, Cys49, Cys83, Cys157, Cys161, and Cys164. One can recognise a Radical SAM core domain in the interval Arg143–Glu375. The TRAM domain maps to Arg378–Gln442.

It belongs to the methylthiotransferase family. MiaB subfamily. In terms of assembly, monomer. [4Fe-4S] cluster is required as a cofactor.

The protein resides in the cytoplasm. It carries out the reaction N(6)-dimethylallyladenosine(37) in tRNA + (sulfur carrier)-SH + AH2 + 2 S-adenosyl-L-methionine = 2-methylsulfanyl-N(6)-dimethylallyladenosine(37) in tRNA + (sulfur carrier)-H + 5'-deoxyadenosine + L-methionine + A + S-adenosyl-L-homocysteine + 2 H(+). Its function is as follows. Catalyzes the methylthiolation of N6-(dimethylallyl)adenosine (i(6)A), leading to the formation of 2-methylthio-N6-(dimethylallyl)adenosine (ms(2)i(6)A) at position 37 in tRNAs that read codons beginning with uridine. This Pseudomonas fluorescens (strain Pf0-1) protein is tRNA-2-methylthio-N(6)-dimethylallyladenosine synthase.